Consider the following 479-residue polypeptide: uncharacterized protein (479 aa).

Residues T150–K158, D360, R375, and K462 contribute to the ATP site.

This sequence belongs to the ATP-dependent AMP-binding enzyme family.

Its function is as follows. May be involved in fatty acid metabolism. This is an uncharacterized protein from Bacillus subtilis (strain 168).